We begin with the raw amino-acid sequence, 374 residues long: Bifunctional enzyme IspD/IspF (374 aa).

Residues 1–213 (MLDVTLIVLC…PCLKAPSNNF (213 aa)) are 2-C-methyl-D-erythritol 4-phosphate cytidylyltransferase. The interval 214–374 (FTGTGFDIHA…TLKYYNWKKR (161 aa)) is 2-C-methyl-D-erythritol 2,4-cyclodiphosphate synthase. Positions 220 and 222 each coordinate a divalent metal cation. 4-CDP-2-C-methyl-D-erythritol 2-phosphate is bound by residues 220–222 (DIH) and 246–247 (HS). Residue His-254 coordinates a divalent metal cation. Residues 268 to 270 (DIG), 273 to 277 (FPDTD), 344 to 347 (TTAE), Phe-351, and Arg-354 contribute to the 4-CDP-2-C-methyl-D-erythritol 2-phosphate site.

In the N-terminal section; belongs to the IspD/TarI cytidylyltransferase family. IspD subfamily. It in the C-terminal section; belongs to the IspF family. The cofactor is a divalent metal cation.

It carries out the reaction 2-C-methyl-D-erythritol 4-phosphate + CTP + H(+) = 4-CDP-2-C-methyl-D-erythritol + diphosphate. The enzyme catalyses 4-CDP-2-C-methyl-D-erythritol 2-phosphate = 2-C-methyl-D-erythritol 2,4-cyclic diphosphate + CMP. It participates in isoprenoid biosynthesis; isopentenyl diphosphate biosynthesis via DXP pathway; isopentenyl diphosphate from 1-deoxy-D-xylulose 5-phosphate: step 2/6. The protein operates within isoprenoid biosynthesis; isopentenyl diphosphate biosynthesis via DXP pathway; isopentenyl diphosphate from 1-deoxy-D-xylulose 5-phosphate: step 4/6. Its function is as follows. Bifunctional enzyme that catalyzes the formation of 4-diphosphocytidyl-2-C-methyl-D-erythritol from CTP and 2-C-methyl-D-erythritol 4-phosphate (MEP) (IspD), and catalyzes the conversion of 4-diphosphocytidyl-2-C-methyl-D-erythritol 2-phosphate (CDP-ME2P) to 2-C-methyl-D-erythritol 2,4-cyclodiphosphate (ME-CPP) with a corresponding release of cytidine 5-monophosphate (CMP) (IspF). The protein is Bifunctional enzyme IspD/IspF of Aliarcobacter butzleri (strain RM4018) (Arcobacter butzleri).